The primary structure comprises 344 residues: Phosphate acyltransferase (344 aa).

Belongs to the PlsX family. Homodimer. Probably interacts with PlsY.

The protein resides in the cytoplasm. It catalyses the reaction a fatty acyl-[ACP] + phosphate = an acyl phosphate + holo-[ACP]. It participates in lipid metabolism; phospholipid metabolism. Its function is as follows. Catalyzes the reversible formation of acyl-phosphate (acyl-PO(4)) from acyl-[acyl-carrier-protein] (acyl-ACP). This enzyme utilizes acyl-ACP as fatty acyl donor, but not acyl-CoA. In Enterobacter sp. (strain 638), this protein is Phosphate acyltransferase.